A 669-amino-acid chain; its full sequence is Carnitine O-palmitoyltransferase 2, mitochondrial (669 aa).

The transit peptide at Met-1–Tyr-36 directs the protein to the mitochondrion. Residues Ser-37–Leu-190 lie on the Mitochondrial matrix side of the membrane. Positions Asn-191–Asn-220 form an intramembrane region, note=Mitochondrial inner membrane. Over Ala-221–His-669 the chain is Mitochondrial matrix. The active-site Proton acceptor is the His-384. Gly-464–Asp-476 contributes to the CoA binding site. Positions 498, 500, and 511 each coordinate (R)-carnitine.

This sequence belongs to the carnitine/choline acetyltransferase family.

It is found in the mitochondrion inner membrane. It carries out the reaction (R)-carnitine + hexadecanoyl-CoA = O-hexadecanoyl-(R)-carnitine + CoA. The enzyme catalyses octanoyl-CoA + (R)-carnitine = O-octanoyl-(R)-carnitine + CoA. It catalyses the reaction decanoyl-CoA + (R)-carnitine = O-decanoyl-(R)-carnitine + CoA. The catalysed reaction is dodecanoyl-CoA + (R)-carnitine = O-dodecanoyl-R-carnitine + CoA. It carries out the reaction tetradecanoyl-CoA + (R)-carnitine = O-tetradecanoyl-(R)-carnitine + CoA. The enzyme catalyses (R)-carnitine + octadecanoyl-CoA = O-octadecanoyl-(R)-carnitine + CoA. It catalyses the reaction eicosanoyl-CoA + (R)-carnitine = O-eicosanoyl-(R)-carnitine + CoA. The catalysed reaction is (9Z)-tetradecenoyl-CoA + (R)-carnitine = O-(9Z)-tetradecenoyl-(R)-carnitine + CoA. It carries out the reaction (5Z)-tetradecenoyl-CoA + (R)-carnitine = O-(5Z)-tetradecenoyl-(R)-carnitine + CoA. The enzyme catalyses (R)-carnitine + (9Z)-octadecenoyl-CoA = O-(9Z)-octadecenoyl-(R)-carnitine + CoA. It catalyses the reaction 4,8-dimethylnonanoyl-CoA + (R)-carnitine = O-4,8-dimethylnonanoyl-(R)-carnitine + CoA. It participates in lipid metabolism; fatty acid beta-oxidation. Involved in the intramitochondrial synthesis of acylcarnitines from accumulated acyl-CoA metabolites. Reconverts acylcarnitines back into the respective acyl-CoA esters that can then undergo beta-oxidation, an essential step for the mitochondrial uptake of long-chain fatty acids and their subsequent beta-oxidation in the mitochondrion. Active with medium (C8-C12) and long-chain (C14-C18) acyl-CoA esters. This Danio rerio (Zebrafish) protein is Carnitine O-palmitoyltransferase 2, mitochondrial (cpt2).